The following is a 170-amino-acid chain: Alpha-crystallin A chain (170 aa).

Met-1 bears the N-acetylmethionine mark. Residues 1-63 form a required for complex formation with BFSP1 and BFSP2 region; it reads MDVTIQQPWF…RTALDSGISE (63 aa). Gln-6 is modified (deamidated glutamine; partial). Ser-45 is modified (phosphoserine). The residue at position 50 (Gln-50) is a Deamidated glutamine; partial. The sHSP domain maps to 52 to 161; the sequence is LFRTALDSGI…SERPIPVSRE (110 aa). An N6-acetyllysine mark is found at Lys-70 and Lys-99. His-100 provides a ligand contact to Zn(2+). Asn-101 carries the post-translational modification Deamidated asparagine; partial. The Zn(2+) site is built by Glu-102, His-107, and His-151. Residues 144-170 are disordered; sequence PKIVDPSHSERPIPVSREEKPSSAPSS. The span at 148 to 164 shows a compositional bias: basic and acidic residues; it reads DPSHSERPIPVSREEKP. O-linked (GlcNAc) serine glycosylation occurs at Ser-159.

This sequence belongs to the small heat shock protein (HSP20) family. As to quaternary structure, heteromer composed of three CRYAA and one CRYAB subunits. Inter-subunit bridging via zinc ions enhances stability, which is crucial as there is no protein turn over in the lens. Can also form homodimers and homotetramers (dimers of dimers) which serve as the building blocks of homooligomers. Within homooligomers, the zinc-binding motif is created from residues of 3 different molecules. His-100 and Glu-102 from one molecule are ligands of the zinc ion, and His-107 and His-151 residues from additional molecules complete the site with tetrahedral coordination geometry. Part of a complex required for lens intermediate filament formation composed of BFSP1, BFSP2 and CRYAA. Post-translationally, acetylation at Lys-70 may increase chaperone activity. Undergoes age-dependent proteolytical cleavage at the C-terminus.

It is found in the cytoplasm. It localises to the nucleus. In terms of biological role, contributes to the transparency and refractive index of the lens. Acts as a chaperone, preventing aggregation of various proteins under a wide range of stress conditions. Required for the correct formation of lens intermediate filaments as part of a complex composed of BFSP1, BFSP2 and CRYAA. In Bradypus variegatus (Brown-throated three-fingered sloth), this protein is Alpha-crystallin A chain (CRYAA).